The sequence spans 181 residues: UPF0301 protein COXBURSA331_A2219 (181 aa).

Belongs to the UPF0301 (AlgH) family.

The sequence is that of UPF0301 protein COXBURSA331_A2219 from Coxiella burnetii (strain RSA 331 / Henzerling II).